The primary structure comprises 248 residues: MAGHSQFKNIMHKKGKQDAIRSKLFSKLAREITVAAKLGLPDPAMNARLRAAVLAARAENMPKDNIERAIKKASAADGENYDEVRYEGYAPGGVALIVEALTDNRNRTAGEVRSYFTKSGGSLAETGAVSFMFDHVGLIEFPASVASEEAMLEAAIEAGAEDVQSNEETHEIITSLESLRDVAQALETKFGEPRKASLIWKAQNAIAVDDEAGEKILRLVNLLEENDDVQNVYANFEVSDTLLAKLGD.

The protein belongs to the TACO1 family.

The protein localises to the cytoplasm. The sequence is that of Probable transcriptional regulatory protein Bind_0345 from Beijerinckia indica subsp. indica (strain ATCC 9039 / DSM 1715 / NCIMB 8712).